The chain runs to 241 residues: MRSGVIAQKLGMTRIFTDAGEHLPVTVLKVESCQVVAHRTLDKNGYVAVQLGAGKRKPKNTNKAERGQFARAEVEPKRKLAEFRVDADALIPVGAEITADHFVVGQYVDVTGTTIGKGFAGGMKRHNFGGLRASHGVSISHRSIGSTGGRQDPGKTFKNKKMPGHMGDVTVTTQNLKVVMTDVERGLIAVEGAVPGHAGGWIMVRDAVKKRLPSEAPKPGAFKLRETAGAVAAEATNEEGA.

Positions 140-168 (SHRSIGSTGGRQDPGKTFKNKKMPGHMGD) are disordered. N5-methylglutamine is present on Gln-151.

It belongs to the universal ribosomal protein uL3 family. As to quaternary structure, part of the 50S ribosomal subunit. Forms a cluster with proteins L14 and L19. Post-translationally, methylated by PrmB.

One of the primary rRNA binding proteins, it binds directly near the 3'-end of the 23S rRNA, where it nucleates assembly of the 50S subunit. This chain is Large ribosomal subunit protein uL3, found in Azorhizobium caulinodans (strain ATCC 43989 / DSM 5975 / JCM 20966 / LMG 6465 / NBRC 14845 / NCIMB 13405 / ORS 571).